The following is a 181-amino-acid chain: Acireductone dioxygenase (181 aa).

H97, H99, E103, and H141 together coordinate Fe(2+). Ni(2+) contacts are provided by H97, H99, E103, and H141.

Belongs to the acireductone dioxygenase (ARD) family. Monomer. Requires Fe(2+) as cofactor. Ni(2+) is required as a cofactor.

The enzyme catalyses 1,2-dihydroxy-5-(methylsulfanyl)pent-1-en-3-one + O2 = 3-(methylsulfanyl)propanoate + CO + formate + 2 H(+). It catalyses the reaction 1,2-dihydroxy-5-(methylsulfanyl)pent-1-en-3-one + O2 = 4-methylsulfanyl-2-oxobutanoate + formate + 2 H(+). It functions in the pathway amino-acid biosynthesis; L-methionine biosynthesis via salvage pathway; L-methionine from S-methyl-5-thio-alpha-D-ribose 1-phosphate: step 5/6. Catalyzes 2 different reactions between oxygen and the acireductone 1,2-dihydroxy-3-keto-5-methylthiopentene (DHK-MTPene) depending upon the metal bound in the active site. Fe-containing acireductone dioxygenase (Fe-ARD) produces formate and 2-keto-4-methylthiobutyrate (KMTB), the alpha-ketoacid precursor of methionine in the methionine recycle pathway. Ni-containing acireductone dioxygenase (Ni-ARD) produces methylthiopropionate, carbon monoxide and formate, and does not lie on the methionine recycle pathway. In Pseudomonas fluorescens (strain ATCC BAA-477 / NRRL B-23932 / Pf-5), this protein is Acireductone dioxygenase.